Here is a 344-residue protein sequence, read N- to C-terminus: MFSCIACTKADGGEEVEHGARGGTTPNTKEAVKSLTIQIKDMALKFSGAYKQCKPCTGSSSSPLKKGHRSFPDYDNASEGVPYPFMGGSAGSTPAWDFTNSSHHPAGRLESKFTSIYGNDRESISAQSCDVVLDDDGPKEWMAQVEPGVHITFASLPTGGNDLKRIRFSREMFDKWQAQRWWGENYDKIVELYNVQRFNRQALQTPARSDDQSQRDSTYSKMDSARESKDWTPRHNFRPPGSVPHHFYGGSSNYGPGSYHGGPPMDAARTTTSSRDDPPSMSNASEMQAEWIEEDEPGVYITIRQLSDGTRELRRVRFSRERFGEVHAKTWWEQNRERIQTQYL.

The BRX 1 domain occupies 139 to 194 (KEWMAQVEPGVHITFASLPTGGNDLKRIRFSREMFDKWQAQRWWGENYDKIVELYN). The disordered stretch occupies residues 203-286 (LQTPARSDDQ…DPPSMSNASE (84 aa)). Basic and acidic residues predominate over residues 223–233 (DSARESKDWTP). Residues 248 to 264 (YGGSSNYGPGSYHGGPP) show a composition bias toward low complexity. The BRX 2 domain maps to 289 to 344 (AEWIEEDEPGVYITIRQLSDGTRELRRVRFSRERFGEVHAKTWWEQNRERIQTQYL).

The protein belongs to the BRX family. In terms of assembly, homodimer and heterodimer with BRXL1. Interacts with NGA1 and ARF5. As to expression, expressed in the developing protophloem up to the elongation zone in root meristem of young seedlings, in the columella and the phloem vasculature throughout the root and in the phloem vasculature in the shoot. Detected in the shoot meristem and in primordia. Low expression in stomata. Confined to sieve element precursor cells and to protophloem.

Its subcellular location is the nucleus. The protein localises to the cell membrane. Its function is as follows. Acts as a regulator of cell proliferation and elongation in the root and shoot. Regulates roots architecture and primary root protophloem differentiation. BRX, BAM3, and CLE45 act together to regulate the transition of protophloem cells from proliferation to differentiation, thus impinging on postembryonic growth capacity of the root meristem. Probable transcription regulator. Regulated by the auxin response factor ARF5. Polarly localized in vascular cells and subject to endocytic recycling. Required for CPD expression and for correct nuclear auxin response. Mediates cross-talk between the auxin and brassinosteroid pathways. BRX is a target for auxin-induced, proteasome-mediated degradation. The polypeptide is Protein BREVIS RADIX (Arabidopsis thaliana (Mouse-ear cress)).